A 51-amino-acid chain; its full sequence is Insulin (51 aa).

Disulfide bonds link Cys7/Cys37, Cys19/Cys50, and Cys36/Cys41.

The protein belongs to the insulin family. In terms of assembly, heterodimer of a B chain and an A chain linked by two disulfide bonds.

It localises to the secreted. Its function is as follows. Insulin decreases blood glucose concentration. It increases cell permeability to monosaccharides, amino acids and fatty acids. It accelerates glycolysis, the pentose phosphate cycle, and glycogen synthesis in liver. This is Insulin (INS) from Didelphis virginiana (North American opossum).